A 314-amino-acid chain; its full sequence is 4-hydroxy-3-methylbut-2-enyl diphosphate reductase (314 aa).

Cysteine 12 contacts [4Fe-4S] cluster. (2E)-4-hydroxy-3-methylbut-2-enyl diphosphate contacts are provided by histidine 41 and histidine 74. Dimethylallyl diphosphate-binding residues include histidine 41 and histidine 74. Histidine 41 and histidine 74 together coordinate isopentenyl diphosphate. Cysteine 96 provides a ligand contact to [4Fe-4S] cluster. A (2E)-4-hydroxy-3-methylbut-2-enyl diphosphate-binding site is contributed by histidine 124. Histidine 124 is a dimethylallyl diphosphate binding site. Histidine 124 lines the isopentenyl diphosphate pocket. Catalysis depends on glutamate 126, which acts as the Proton donor. Threonine 167 lines the (2E)-4-hydroxy-3-methylbut-2-enyl diphosphate pocket. Cysteine 197 contacts [4Fe-4S] cluster. (2E)-4-hydroxy-3-methylbut-2-enyl diphosphate contacts are provided by serine 225, serine 226, asparagine 227, and serine 269. Dimethylallyl diphosphate-binding residues include serine 225, serine 226, asparagine 227, and serine 269. Isopentenyl diphosphate-binding residues include serine 225, serine 226, asparagine 227, and serine 269.

Belongs to the IspH family. [4Fe-4S] cluster serves as cofactor.

The catalysed reaction is isopentenyl diphosphate + 2 oxidized [2Fe-2S]-[ferredoxin] + H2O = (2E)-4-hydroxy-3-methylbut-2-enyl diphosphate + 2 reduced [2Fe-2S]-[ferredoxin] + 2 H(+). The enzyme catalyses dimethylallyl diphosphate + 2 oxidized [2Fe-2S]-[ferredoxin] + H2O = (2E)-4-hydroxy-3-methylbut-2-enyl diphosphate + 2 reduced [2Fe-2S]-[ferredoxin] + 2 H(+). It functions in the pathway isoprenoid biosynthesis; dimethylallyl diphosphate biosynthesis; dimethylallyl diphosphate from (2E)-4-hydroxy-3-methylbutenyl diphosphate: step 1/1. It participates in isoprenoid biosynthesis; isopentenyl diphosphate biosynthesis via DXP pathway; isopentenyl diphosphate from 1-deoxy-D-xylulose 5-phosphate: step 6/6. Catalyzes the conversion of 1-hydroxy-2-methyl-2-(E)-butenyl 4-diphosphate (HMBPP) into a mixture of isopentenyl diphosphate (IPP) and dimethylallyl diphosphate (DMAPP). Acts in the terminal step of the DOXP/MEP pathway for isoprenoid precursor biosynthesis. In Glaesserella parasuis serovar 5 (strain SH0165) (Haemophilus parasuis), this protein is 4-hydroxy-3-methylbut-2-enyl diphosphate reductase.